An 85-amino-acid chain; its full sequence is Large ribosomal subunit protein bL27 (85 aa).

The segment at 1-22 is disordered; it reads MAHKKAGGSTRNGRDSESKRLG.

The protein belongs to the bacterial ribosomal protein bL27 family.

This chain is Large ribosomal subunit protein bL27, found in Aliivibrio salmonicida (strain LFI1238) (Vibrio salmonicida (strain LFI1238)).